Reading from the N-terminus, the 220-residue chain is Large ribosomal subunit protein uL3 (220 aa).

The tract at residues 61 to 81 (KGSKSNKYANKPAEGHAKKAD) is disordered.

This sequence belongs to the universal ribosomal protein uL3 family. As to quaternary structure, part of the 50S ribosomal subunit. Forms a cluster with proteins L14 and L19.

One of the primary rRNA binding proteins, it binds directly near the 3'-end of the 23S rRNA, where it nucleates assembly of the 50S subunit. This chain is Large ribosomal subunit protein uL3, found in Staphylococcus epidermidis (strain ATCC 12228 / FDA PCI 1200).